A 198-amino-acid polypeptide reads, in one-letter code: MSLSIDVTGLPSISSSVYKNESSSTTSTISGKSIGRSEQYISPDAEAFRKYMLSKSPEDIGPSDSASNDPLTSFSIRSNAVKTNADAGVSMDSSAQSRPSSDIGYDQMDFSLNKGIKFDATVDSSISISTTSKKEKSKNKNKYKKCYPKIEAESDSDDYILDDSDSDDGKCKNCKYKKKYFALRLRMKQVAMQLIKDL.

3 disordered regions span residues 13–37 (ISSS…IGRS), 52–72 (MLSK…DPLT), and 86–106 (DAGV…IGYD). Residues 22 to 37 (SSSTTSTISGKSIGRS) show a composition bias toward low complexity. Ser67 is subject to Phosphoserine; by host CK1. The segment covering 91–100 (MDSSAQSRPS) has biased composition (polar residues). Asp92 provides a ligand contact to Mg(2+). 4 positions are modified to phosphoserine; by host: Ser154, Ser156, Ser164, and Ser166.

This sequence belongs to the rotavirus NSP5 family. Homodimer. Interacts with VP1. Interacts with VP2. Interacts with NSP2; this interaction leads to up-regulation of NSP5 hyperphosphorylation and formation of virus factories. Interacts with NSP6. Participates in the selective exclusion of host proteins from stress granules (SG) and P bodies (PB). Also participates in the sequestration of these remodeled organelles in viral factories. Requires Mg(2+) as cofactor. In terms of processing, O-glycosylated. Post-translationally, hyperphosphorylated on serine residues, when in dimeric form. Phosphorylation by host CK1 is required for the hyperphosphorylation of NSP5 dimer.

The protein localises to the host cytoplasm. Its function is as follows. Plays an essential role in the viral genome replication. Participates, together with NSP2, in the formation of viral factories (viroplasms), which are large inclusions in the host cytoplasm where replication intermediates are assembled and viral RNA replication takes place. Orchestrates the recruitment of viroplasmic proteins such as capsid proteins to these factories. Participates in the selective exclusion of host proteins from stress granules (SG) and P bodies (PB). Also participates in the sequestration of these remodeled organelles in viral factories. The protein is Non-structural protein 5 of Homo sapiens (Human).